The following is a 1708-amino-acid chain: Non-structural polyprotein pORF1 (1708 aa).

One can recognise an Alphavirus-like MT domain in the interval 56 to 240 (VFRPEVLWNH…HDVSILRAWI (185 aa)). The segment at 60–240 (EVLWNHPIQR…HDVSILRAWI (181 aa)) is methyltransferase. The segment at 241 to 439 (RTTKIVGDHP…FYAQCRRWLS (199 aa)) is Y-domain. A disulfide bridge links cysteine 434 with cysteine 481. The interval 442–509 (FHLDPRVLVF…EAYEGSEVDP (68 aa)) is putative protease. Residues 510–691 (AEPAHLDVSG…FSPGHIWESA (182 aa)) are zinc-binding. Histidine 671, glutamate 673, and histidine 686 together coordinate Zn(2+). The tract at residues 714–793 (FSPPEAAAPV…PPTPPPSRTR (80 aa)) is hinge. The 147-residue stretch at 790-936 (SRTRRLLYTY…LYLTEPAAAW (147 aa)) folds into the Macro domain. Positions 800–957 (PDGAKVYAGS…TITEDTARTA (158 aa)) are X-domain. The 149-residue stretch at 949 to 1097 (ITEDTARTAN…RPELAPTSWW (149 aa)) folds into the (+)RNA virus helicase ATP-binding domain. The tract at residues 975–1219 (GCTISPGIVH…ISDVIVNNFF (245 aa)) is NTPase/helicase. 990 to 997 (GVPGSGKS) lines the ATP pocket. The region spanning 1098 to 1231 (HVTHRCPADV…GGEVGHHRPS (134 aa)) is the (+)RNA virus helicase C-terminal domain. Residues 1222-1708 (GGEVGHHRPS…LTNSIIQRVE (487 aa)) are RNA-directed RNA polymerase. In terms of domain architecture, RdRp catalytic spans 1469 to 1580 (CMVFENDFSE…LCSDYRQSRN (112 aa)).

Belongs to the hepevirus non-structural polyprotein family. In terms of assembly, the protease domain interacts with host EIF2AK4 (via C-terminus); this interaction inhibits dimerization of EIF2AK4 and prevents EIF2AK4-mediated phosphorylation of host EIF2A. Requires Mg(2+) as cofactor. ORF1 polyprotein does not seem to be processed into distinct enzymatic domains by a viral protease belonging to ORF1, but could be processed by a host serine protease like thrombin.

It localises to the host cytoplasm. It is found in the host perinuclear region. The catalysed reaction is RNA(n) + a ribonucleoside 5'-triphosphate = RNA(n+1) + diphosphate. The enzyme catalyses GTP + S-adenosyl-L-methionine = N(7)-methyl-GTP + S-adenosyl-L-homocysteine. Putative protease: Inhibited by chymostatin. Its function is as follows. Methyltransferase: Displays a capping enzyme activity. This function is necessary since all viral RNAs are synthesized in the cytoplasm, and host capping enzymes are restricted to the nucleus. The enzymatic reaction involves a covalent link between 7-methyl-GMP and the methyltransferase, whereas eukaryotic capping enzymes form a covalent complex only with GMP. Methyltransferase catalyzes transfer of a methyl group from S-adenosylmethionine to GTP and GDP to yield m(7)GTP or m(7)GDP. GDP is a better substrate than GTP. This enzyme also displays guanylyltransferase activity to form a covalent complex, methyltransferase-m(7)GMP, from which 7-methyl-GMP is transferred to the mRNA to create the cap structure. In terms of biological role, Y-domain: Indispensable for virus replication. Putative protease: The putative protease domain although necessary for replication of the virus may not be a protease but rather a structural Zn(2+)-binding domain. Inhibits induction of IFN-beta by MDA5 and RIG-I pathways and down-regulates the expression of MDA5. Functionally, NTPase/helicase: Multi-functional protein that exhibits NTPase and RNA unwinding activities. Hydrolyzes all NTPs efficiently and unwinds RNA duplexes containing 5' overhangs. Possesses a sequence independent RNA-5'-triphosphatase (RTPase) activity suggestive of its role in forming viral cap structure. Also participates in viral genome replication, RNA translocation and genome packaging/unpackaging. Its function is as follows. RNA-directed RNA polymerase: Plays an essential role in the virus replication. Binds to the 3'-end of the genomic RNA to initiate viral replication. This is Non-structural polyprotein pORF1 from Bandicota bengalensis (lesser bandicoot rat).